The sequence spans 440 residues: Probable exopolygalacturonase B (440 aa).

An N-terminal signal peptide occupies residues 1–20 (MRLHFLPLVALCATTASSLA). 3 N-linked (GlcNAc...) asparagine glycosylation sites follow: N65, N190, and N230. Residue D260 is the Proton donor of the active site. A disulfide bond links C262 and C279. Residues N268 and N280 are each glycosylated (N-linked (GlcNAc...) asparagine). The active site involves H283. N-linked (GlcNAc...) asparagine glycosylation is found at N307, N334, and N371. The cysteines at positions 397 and 403 are disulfide-linked. A glycan (N-linked (GlcNAc...) asparagine) is linked at N412.

It belongs to the glycosyl hydrolase 28 family.

It is found in the secreted. The catalysed reaction is [(1-&gt;4)-alpha-D-galacturonosyl](n) + H2O = alpha-D-galacturonate + [(1-&gt;4)-alpha-D-galacturonosyl](n-1). Its function is as follows. Specific in hydrolyzing the terminal glycosidic bond of polygalacturonic acid and oligogalacturonates. This is Probable exopolygalacturonase B (pgxB) from Emericella nidulans (strain FGSC A4 / ATCC 38163 / CBS 112.46 / NRRL 194 / M139) (Aspergillus nidulans).